The sequence spans 591 residues: NADH-quinone oxidoreductase subunit C/D (591 aa).

The tract at residues 1–182 (MVTVVENIDP…TPYFLNTAKQ (182 aa)) is NADH dehydrogenase I subunit C. Positions 206 to 591 (DFMFLNIGPN…IDVVMADCDR (386 aa)) are NADH dehydrogenase I subunit D.

This sequence in the N-terminal section; belongs to the complex I 30 kDa subunit family. It in the C-terminal section; belongs to the complex I 49 kDa subunit family. As to quaternary structure, NDH-1 is composed of 13 different subunits. Subunits NuoB, CD, E, F, and G constitute the peripheral sector of the complex.

It localises to the cell inner membrane. The catalysed reaction is a quinone + NADH + 5 H(+)(in) = a quinol + NAD(+) + 4 H(+)(out). In terms of biological role, NDH-1 shuttles electrons from NADH, via FMN and iron-sulfur (Fe-S) centers, to quinones in the respiratory chain. The immediate electron acceptor for the enzyme in this species is believed to be ubiquinone. Couples the redox reaction to proton translocation (for every two electrons transferred, four hydrogen ions are translocated across the cytoplasmic membrane), and thus conserves the redox energy in a proton gradient. The sequence is that of NADH-quinone oxidoreductase subunit C/D from Psychrobacter arcticus (strain DSM 17307 / VKM B-2377 / 273-4).